The primary structure comprises 199 residues: Dephospho-CoA kinase (199 aa).

In terms of domain architecture, DPCK spans 3–199 (VLGLTGSIGM…AAARMPRRRP (197 aa)). An ATP-binding site is contributed by 11-16 (GMGKST).

It belongs to the CoaE family.

The protein resides in the cytoplasm. It carries out the reaction 3'-dephospho-CoA + ATP = ADP + CoA + H(+). The protein operates within cofactor biosynthesis; coenzyme A biosynthesis; CoA from (R)-pantothenate: step 5/5. In terms of biological role, catalyzes the phosphorylation of the 3'-hydroxyl group of dephosphocoenzyme A to form coenzyme A. This chain is Dephospho-CoA kinase, found in Rhodopseudomonas palustris (strain HaA2).